The sequence spans 354 residues: Alkanal monooxygenase alpha chain (354 aa).

Belongs to the bacterial luciferase oxidoreductase family. As to quaternary structure, heterodimer of an alpha and a beta chain.

It catalyses the reaction a long-chain fatty aldehyde + FMNH2 + O2 = a long-chain fatty acid + hnu + FMN + H2O + 2 H(+). Functionally, light-emitting reaction in luminous bacteria. The protein is Alkanal monooxygenase alpha chain (luxA) of Photobacterium leiognathi.